The sequence spans 326 residues: Glutaredoxin 3 (326 aa).

A Thioredoxin domain is found at 1–108 (MANFTDAASL…LTNKVQRLGS (108 aa)). Glutaredoxin domains lie at 125–227 (NQRL…VSLE) and 227–326 (ENRL…KGEN). [2Fe-2S] cluster contacts are provided by Cys-150 and Cys-252.

As to quaternary structure, homodimer; the homodimer is independent of 2Fe-2S clusters. Heterotrimer; forms a heterotrimeric complex composed by two bola2 molecules and one glrx3 molecule; linked by [2Fe-2S] clusters.

The protein resides in the cytoplasm. Its subcellular location is the cytosol. Together with bola2, acts as a cytosolic iron-sulfur (Fe-S) cluster assembly factor that facilitates [2Fe-2S] cluster insertion into a subset of cytosolic proteins. Required for hemoglobin maturation. Does not possess any thyoredoxin activity since it lacks the conserved motif that is essential for catalytic activity. The chain is Glutaredoxin 3 (glrx3) from Danio rerio (Zebrafish).